A 527-amino-acid polypeptide reads, in one-letter code: MNINFSKDDITGLPKSTKEEDENDFSSLDYSDLFMDVEIGRGSFGQVQKASYFGTDVAVKQLSTLVSIDPDYFKFMLREIKILKGMRHPNIVQYIGACCHEGRYMIVTEYIKGGDLHQFIKARGVSNISWTLRMKLALDIASAFSYLHSKKVIFRDLKAKNILVDEIGDGLYRAKVIDFGFARIFDGKDTNNLTICGSENTMSPEVIVGSSYNDSCDVYSYGVLLLELICGSRVVKTQLKRTPMNAFDMNLEKAEHLAPESCPRAFMDLAKWCCSYNPKDRPTFKIVVEGLKVLTNQQLKDLPVKGKSKPYIDPDEDSFIDPNDDSNNNNNSENNNNNNDNSNENNENNNENNNNSNENNNKKNKNGSGGDISGSSVIIKTDEEESFNSVVYKEHAVAQPLPNIDYGGQNKRQNNIFNPSFFTPPPNSKSMMDLKQSSAVDEDEDEDEDDVPSELLTSLTVNDIRYSNPKSFAATISTPNLNYATALDQDPPKPLSQSACATVLGGIPPMQPKKKPNNKNKKKKKKL.

Positions 1–10 are enriched in basic and acidic residues; the sequence is MNINFSKDDI. The tract at residues 1 to 24 is disordered; it reads MNINFSKDDITGLPKSTKEEDEND. The region spanning 33 to 294 is the Protein kinase domain; sequence LFMDVEIGRG…KIVVEGLKVL (262 aa). Residues 39–47 and K60 each bind ATP; that span reads IGRGSFGQV. D156 serves as the catalytic Proton acceptor. 3 disordered regions span residues 304 to 375, 422 to 452, and 485 to 527; these read VKGK…ISGS, FTPP…DDVP, and TALD…KKKL. Residues 313–324 are compositionally biased toward acidic residues; sequence DPDEDSFIDPND. The span at 325–359 shows a compositional bias: low complexity; sequence DSNNNNNSENNNNNNDNSNENNENNNENNNNSNEN. Over residues 440–452 the composition is skewed to acidic residues; the sequence is VDEDEDEDEDDVP. The segment covering 512-527 has biased composition (basic residues); sequence PKKKPNNKNKKKKKKL.

Belongs to the protein kinase superfamily. TKL Ser/Thr protein kinase family.

The enzyme catalyses L-seryl-[protein] + ATP = O-phospho-L-seryl-[protein] + ADP + H(+). It catalyses the reaction L-threonyl-[protein] + ATP = O-phospho-L-threonyl-[protein] + ADP + H(+). The sequence is that of Probable serine/threonine-protein kinase DDB_G0271538 from Dictyostelium discoideum (Social amoeba).